The chain runs to 266 residues: GTP cyclohydrolase III (266 aa).

This sequence belongs to the archaeal-type GTP cyclohydrolase family.

The enzyme catalyses GTP + 3 H2O = 2-amino-5-formylamino-6-(5-phospho-D-ribosylamino)pyrimidin-4(3H)-one + 2 phosphate + 2 H(+). In terms of biological role, catalyzes the formation of 2-amino-5-formylamino-6-ribofuranosylamino-4(3H)-pyrimidinone ribonucleotide monophosphate and inorganic phosphate from GTP. Also has an independent pyrophosphate phosphohydrolase activity. This Methanococcus vannielii (strain ATCC 35089 / DSM 1224 / JCM 13029 / OCM 148 / SB) protein is GTP cyclohydrolase III.